The chain runs to 192 residues: Recombination protein RecR (192 aa).

Residues 51–66 form a C4-type zinc finger; that stretch reads CQTCFHLSADPECEIC. The Toprim domain occupies 74–168; sequence GLICVVADSR…PVSRIAYGLP (95 aa).

Belongs to the RecR family.

May play a role in DNA repair. It seems to be involved in an RecBC-independent recombinational process of DNA repair. It may act with RecF and RecO. This Parasynechococcus marenigrum (strain WH8102) protein is Recombination protein RecR.